We begin with the raw amino-acid sequence, 238 residues long: Ribonuclease PH (238 aa).

Phosphate contacts are provided by residues arginine 86 and 124–126 (GTR).

The protein belongs to the RNase PH family. As to quaternary structure, homohexameric ring arranged as a trimer of dimers.

The catalysed reaction is tRNA(n+1) + phosphate = tRNA(n) + a ribonucleoside 5'-diphosphate. In terms of biological role, phosphorolytic 3'-5' exoribonuclease that plays an important role in tRNA 3'-end maturation. Removes nucleotide residues following the 3'-CCA terminus of tRNAs; can also add nucleotides to the ends of RNA molecules by using nucleoside diphosphates as substrates, but this may not be physiologically important. Probably plays a role in initiation of 16S rRNA degradation (leading to ribosome degradation) during starvation. In Vibrio atlanticus (strain LGP32) (Vibrio splendidus (strain Mel32)), this protein is Ribonuclease PH.